Here is a 626-residue protein sequence, read N- to C-terminus: (+)-3-carene synthase 2, chloroplastic (626 aa).

The transit peptide at 1 to 45 (MSLISAVPLASSCVSKSLISSVREHTALRRAIATLQMSRRGKSVA) directs the protein to the chloroplast. Mg(2+) contacts are provided by D377, D381, and D529. The DDXXD motif signature appears at 377–381 (DDMYD).

It belongs to the terpene synthase family. Tpsd subfamily. Requires Mg(2+) as cofactor. The cofactor is Mn(2+).

Its subcellular location is the plastid. The protein localises to the chloroplast. The catalysed reaction is (2E)-geranyl diphosphate = (+)-car-3-ene + diphosphate. Its pathway is terpene metabolism; oleoresin biosynthesis. The protein operates within secondary metabolite biosynthesis; terpenoid biosynthesis. Monoterpene synthase (TPS) involved in the biosynthesis of monoterpene natural products included in conifer oleoresin secretions and volatile emissions; these compounds contribute to biotic and abiotic stress defense against herbivores and pathogens. Catalyzes the conversion of (2E)-geranyl diphosphate (GPP) to (+)-3-carene. The polypeptide is (+)-3-carene synthase 2, chloroplastic (Pinus banksiana (Jack pine)).